Reading from the N-terminus, the 447-residue chain is Phosphoglucosamine mutase (447 aa).

S102 functions as the Phosphoserine intermediate in the catalytic mechanism. Mg(2+) is bound by residues S102, D241, D243, and D245. A Phosphoserine modification is found at S102.

Belongs to the phosphohexose mutase family. Mg(2+) is required as a cofactor. Post-translationally, activated by phosphorylation.

The enzyme catalyses alpha-D-glucosamine 1-phosphate = D-glucosamine 6-phosphate. Its function is as follows. Catalyzes the conversion of glucosamine-6-phosphate to glucosamine-1-phosphate. The polypeptide is Phosphoglucosamine mutase (Pseudomonas syringae pv. tomato (strain ATCC BAA-871 / DC3000)).